The primary structure comprises 220 residues: MIKWLARPADYASVWDAMKTFTAARGPGTADEIWLCEHAPVYTLGQVGRPEHLLNPGLIPVVHCDRGGQVTYHGPGQVLAYTLFDLRRAGLYVREYVDMLEQATLATLRELGLEQACRKPGAPGIYVPQPGGELAKIAALGVKVRNGYAYHGLALNIDMDLSPFLGINPCGYEGLRTVDLAACGVRTSVERAGELLAAQLARAHGQAVQQRAAALAGVPG.

Residues 27-208 form the BPL/LPL catalytic domain; it reads PGTADEIWLC…QLARAHGQAV (182 aa). Substrate contacts are provided by residues 66–73, 139–141, and 152–154; these read RGGQVTYH, ALG, and GLA. Cys-170 functions as the Acyl-thioester intermediate in the catalytic mechanism.

Belongs to the LipB family.

It is found in the cytoplasm. The enzyme catalyses octanoyl-[ACP] + L-lysyl-[protein] = N(6)-octanoyl-L-lysyl-[protein] + holo-[ACP] + H(+). It functions in the pathway protein modification; protein lipoylation via endogenous pathway; protein N(6)-(lipoyl)lysine from octanoyl-[acyl-carrier-protein]: step 1/2. In terms of biological role, catalyzes the transfer of endogenously produced octanoic acid from octanoyl-acyl-carrier-protein onto the lipoyl domains of lipoate-dependent enzymes. Lipoyl-ACP can also act as a substrate although octanoyl-ACP is likely to be the physiological substrate. The sequence is that of Octanoyltransferase from Bordetella pertussis (strain Tohama I / ATCC BAA-589 / NCTC 13251).